Consider the following 664-residue polypeptide: Zinc finger protein 710 (664 aa).

Glycyl lysine isopeptide (Lys-Gly) (interchain with G-Cter in SUMO2) cross-links involve residues lysine 110 and lysine 113. A disordered region spans residues 121 to 141 (VYEVSVPGDDKDAGPAEAPAE). C2H2-type zinc fingers lie at residues 295 to 317 (WQCR…ILGH), 323 to 345 (HSCP…LLTH), and 351 to 373 (HKCQ…MLLH). A Glycyl lysine isopeptide (Lys-Gly) (interchain with G-Cter in SUMO2) cross-link involves residue lysine 377. C2H2-type zinc fingers lie at residues 379-401 (YSCH…EVKH), 407-429 (HVCV…LASH), 435-457 (YQCL…MLKH), 463-485 (FVCT…SLTH), 491-513 (FKCE…MLIH), 519-541 (YQCH…MIVH), 547-569 (FKCK…MHLH), and 575-598 (FKCP…KVKH).

This sequence belongs to the krueppel C2H2-type zinc-finger protein family.

The protein localises to the nucleus. Its function is as follows. May be involved in transcriptional regulation. The chain is Zinc finger protein 710 (ZNF710) from Homo sapiens (Human).